The chain runs to 220 residues: NAD(P)H-quinone oxidoreductase subunit M, chloroplastic (220 aa).

A chloroplast-targeting transit peptide spans 1–37 (MATTASPFLSPAKLSLERRLPRATWTARRSVRFPPVR). Positions 20–91 (LPRATWTARR…PVQPLAESKN (72 aa)) are disordered. The span at 34 to 44 (PPVRAQDQQQQ) shows a compositional bias: low complexity.

The protein belongs to the NDH complex subunit M family. Part of the chloroplast NDH complex, composed of a mixture of chloroplast and nucleus encoded subunits. Component of the NDH subcomplex A, at least composed of ndhH, ndhI, ndhJ, ndhK, ndhL, ndhM, ndhN and ndhO.

Its subcellular location is the plastid. It localises to the chloroplast thylakoid membrane. It carries out the reaction a plastoquinone + NADH + (n+1) H(+)(in) = a plastoquinol + NAD(+) + n H(+)(out). The enzyme catalyses a plastoquinone + NADPH + (n+1) H(+)(in) = a plastoquinol + NADP(+) + n H(+)(out). Functionally, NDH shuttles electrons from NAD(P)H:plastoquinone, via FMN and iron-sulfur (Fe-S) centers, to quinones in the photosynthetic chain and possibly in a chloroplast respiratory chain. The immediate electron acceptor for the enzyme in this species is believed to be plastoquinone. Couples the redox reaction to proton translocation, and thus conserves the redox energy in a proton gradient. The polypeptide is NAD(P)H-quinone oxidoreductase subunit M, chloroplastic (Oryza sativa subsp. indica (Rice)).